The sequence spans 271 residues: 2-aminophenol 1,6-dioxygenase alpha subunit (271 aa).

It belongs to the LigB/MhpB extradiol dioxygenase family. Heterotetramer of 2 alpha and 2 beta subunits.

Component of the 2-aminophenol 1,6-dioxygenase complex that catalyzes the ring fission of 2-aminophenol to produce 2-aminomuconic 6-semialdehyde. AmnA seems to have a role in the stability of the complex. In Pseudomonas sp, this protein is 2-aminophenol 1,6-dioxygenase alpha subunit (amnA).